We begin with the raw amino-acid sequence, 448 residues long: Protein kinase C and casein kinase substrate in neurons protein 2 (448 aa).

Positions 11 to 282 constitute an F-BAR domain; it reads VEVSSDSFWE…NIKTADAVED (272 aa). Residues 25–274 adopt a coiled-coil conformation; sequence KRTVKRIDDG…NIYRELEQNI (250 aa). Residues 315–386 form a disordered region; the sequence is SRREKKKASD…DTNPFDEDTS (72 aa). The segment covering 329 to 358 has biased composition (polar residues); the sequence is TGINQTGDQVSQPNKHSSVSSYEKNQSYPT. The short motif at 367–369 is the NPF1 element; that stretch reads NPF. The short motif at 379-381 is the NPF2 element; it reads NPF. An SH3 domain is found at 388–448; sequence VMEVRVRALY…YPANYVEPIQ (61 aa).

The protein belongs to the PACSIN family. In terms of processing, phosphorylated on serine residues. In terms of tissue distribution, detected in intestine, cardiac muscle, lung and brain (at protein level). Expressed in all tissues tested, including, gizzard, liver, cardiac muscle, skeletal muscle and skin.

It localises to the cytoplasm. The protein localises to the cytoskeleton. The protein resides in the cytoplasmic vesicle membrane. It is found in the cell projection. Its subcellular location is the ruffle membrane. It localises to the early endosome. The protein localises to the recycling endosome membrane. The protein resides in the cell membrane. It is found in the membrane. Its subcellular location is the caveola. It localises to the cell junction. The protein localises to the focal adhesion. Its function is as follows. Regulates the morphogenesis and endocytosis of caveolae. Lipid-binding protein that is able to promote the tubulation of the phosphatidic acid-containing membranes it preferentially binds. Plays a role in intracellular vesicle-mediated transport. Involved in the endocytosis of cell-surface receptors like the EGF receptor, contributing to its internalization in the absence of EGF stimulus. Essential for endothelial organization in sprouting angiogenesis, modulates CDH5-based junctions. Facilitates endothelial front-rear polarity during migration by recruiting EHD4 and MICALL1 to asymmetric adherens junctions between leader and follower cells. The polypeptide is Protein kinase C and casein kinase substrate in neurons protein 2 (PACSIN2) (Gallus gallus (Chicken)).